The primary structure comprises 618 residues: Proline--tRNA ligase (618 aa).

The protein belongs to the class-II aminoacyl-tRNA synthetase family. ProS type 1 subfamily. Homodimer.

It localises to the cytoplasm. The catalysed reaction is tRNA(Pro) + L-proline + ATP = L-prolyl-tRNA(Pro) + AMP + diphosphate. In terms of biological role, catalyzes the attachment of proline to tRNA(Pro) in a two-step reaction: proline is first activated by ATP to form Pro-AMP and then transferred to the acceptor end of tRNA(Pro). As ProRS can inadvertently accommodate and process non-cognate amino acids such as alanine and cysteine, to avoid such errors it has two additional distinct editing activities against alanine. One activity is designated as 'pretransfer' editing and involves the tRNA(Pro)-independent hydrolysis of activated Ala-AMP. The other activity is designated 'posttransfer' editing and involves deacylation of mischarged Ala-tRNA(Pro). The misacylated Cys-tRNA(Pro) is not edited by ProRS. The protein is Proline--tRNA ligase of Streptococcus uberis (strain ATCC BAA-854 / 0140J).